A 292-amino-acid chain; its full sequence is F-box/LRR-repeat protein 15 (292 aa).

The 48-residue stretch at 12–59 (LLDLPWEDVLVPHILSYLPLRHILSLQRVSKPFHSLVHIYLCNCRHFD) folds into the F-box domain. LRR repeat units follow at residues 134 to 155 (HLQN…RSLA), 160 to 181 (CLEA…SYLV), 186 to 207 (RLKS…EETA), 212 to 233 (DLEH…RTLA), and 238 to 259 (NLKS…GNLR).

This sequence belongs to the FBXL15 family. As to quaternary structure, part of the SCF (SKP1-CUL1-F-box) E3 ubiquitin-protein ligase complex SCF(FBXL15).

It is found in the cytoplasm. It participates in protein modification; protein ubiquitination. Substrate recognition component of a SCF (SKP1-CUL1-F-box protein) E3 ubiquitin-protein ligase complex which mediates the ubiquitination and subsequent proteasomal degradation of target proteins. Acts as a positive regulator of the BMP signaling pathway. Required for dorsal/ventral pattern formation. In Xenopus laevis (African clawed frog), this protein is F-box/LRR-repeat protein 15 (fbxl15).